We begin with the raw amino-acid sequence, 770 residues long: Penicillin-binding protein 1C (770 aa).

The Cytoplasmic segment spans residues 1–8; sequence MPRLLTKR. A helical; Signal-anchor for type II membrane protein membrane pass occupies residues 9-29; the sequence is GCWITLAAAPFLLFLAAWGAD. Over 30–770 the chain is Periplasmic; it reads KLWPLPLHEV…QIATVKFVMQ (741 aa). The interval 43–213 is transglycosylase; the sequence is RVVVAQDGTP…SRLRPDRWPE (171 aa). The Proton donor; for transglycosylase activity role is filled by E84. Residues 278 to 559 are transpeptidase; it reads AGLQRRLEEL…FASAVPLLNQ (282 aa). Catalysis depends on S342, which acts as the Acyl-ester intermediate; for transpeptidase activity.

In the N-terminal section; belongs to the glycosyltransferase 51 family. The protein in the C-terminal section; belongs to the transpeptidase family.

Its subcellular location is the cell inner membrane. The enzyme catalyses [GlcNAc-(1-&gt;4)-Mur2Ac(oyl-L-Ala-gamma-D-Glu-L-Lys-D-Ala-D-Ala)](n)-di-trans,octa-cis-undecaprenyl diphosphate + beta-D-GlcNAc-(1-&gt;4)-Mur2Ac(oyl-L-Ala-gamma-D-Glu-L-Lys-D-Ala-D-Ala)-di-trans,octa-cis-undecaprenyl diphosphate = [GlcNAc-(1-&gt;4)-Mur2Ac(oyl-L-Ala-gamma-D-Glu-L-Lys-D-Ala-D-Ala)](n+1)-di-trans,octa-cis-undecaprenyl diphosphate + di-trans,octa-cis-undecaprenyl diphosphate + H(+). Its pathway is cell wall biogenesis; peptidoglycan biosynthesis. Transglycosylase activity can be inhibited by moenomycin. Functionally, cell wall formation. The enzyme has a penicillin-insensitive transglycosylase N-terminal domain (formation of linear glycan strands) and a transpeptidase C-terminal domain which may not be functional. The polypeptide is Penicillin-binding protein 1C (pbpC) (Escherichia coli (strain K12)).